The primary structure comprises 411 residues: Peptidase T (411 aa).

Position 79 (histidine 79) interacts with Zn(2+). The active site involves aspartate 81. A Zn(2+)-binding site is contributed by aspartate 142. Catalysis depends on glutamate 176, which acts as the Proton acceptor. Positions 177, 199, and 381 each coordinate Zn(2+).

The protein belongs to the peptidase M20B family. Zn(2+) serves as cofactor.

Its subcellular location is the cytoplasm. The enzyme catalyses Release of the N-terminal residue from a tripeptide.. In terms of biological role, cleaves the N-terminal amino acid of tripeptides. In Exiguobacterium sibiricum (strain DSM 17290 / CCUG 55495 / CIP 109462 / JCM 13490 / 255-15), this protein is Peptidase T.